A 331-amino-acid chain; its full sequence is Aspartate carbamoyltransferase catalytic subunit (331 aa).

2 residues coordinate carbamoyl phosphate: Arg66 and Thr67. Residue Lys94 participates in L-aspartate binding. Carbamoyl phosphate-binding residues include Arg116, His149, and Gln152. L-aspartate contacts are provided by Arg189 and Arg243. Carbamoyl phosphate is bound by residues Gly284 and Pro285.

It belongs to the aspartate/ornithine carbamoyltransferase superfamily. ATCase family. As to quaternary structure, heterododecamer (2C3:3R2) of six catalytic PyrB chains organized as two trimers (C3), and six regulatory PyrI chains organized as three dimers (R2).

It catalyses the reaction carbamoyl phosphate + L-aspartate = N-carbamoyl-L-aspartate + phosphate + H(+). Its pathway is pyrimidine metabolism; UMP biosynthesis via de novo pathway; (S)-dihydroorotate from bicarbonate: step 2/3. Its function is as follows. Catalyzes the condensation of carbamoyl phosphate and aspartate to form carbamoyl aspartate and inorganic phosphate, the committed step in the de novo pyrimidine nucleotide biosynthesis pathway. The protein is Aspartate carbamoyltransferase catalytic subunit of Thermosynechococcus vestitus (strain NIES-2133 / IAM M-273 / BP-1).